Consider the following 320-residue polypeptide: Mitochondrial ribosome-associated GTPase 1 (320 aa).

Residues 37 to 209 (LKQMRASPRK…LLDTPGVLPP (173 aa)) enclose the CP-type G domain. Residues 81–84 (NKMD), 153–158 (NVGKSS), and G205 each bind GTP.

It belongs to the TRAFAC class YlqF/YawG GTPase family. MTG1 subfamily.

It is found in the mitochondrion inner membrane. In terms of biological role, plays a role in the regulation of the mitochondrial ribosome assembly and of translational activity. Displays mitochondrial GTPase activity. The protein is Mitochondrial ribosome-associated GTPase 1 of Ictalurus punctatus (Channel catfish).